A 221-amino-acid chain; its full sequence is Glutathione S-transferase (221 aa).

The region spanning 3 to 83 is the GST N-terminal domain; sequence GKPVLHYANT…YIAGKYNLYG (81 aa). Residues Tyr-9, Lys-45, 54-55, and 67-68 each bind glutathione; these read QV and QT. The GST C-terminal domain occupies 85 to 208; sequence DLKERALIDM…QPGSQRKPRL (124 aa).

Belongs to the GST superfamily. Alpha family. Homodimer or heterodimer of GSTA1 and GSTA2.

The catalysed reaction is RX + glutathione = an S-substituted glutathione + a halide anion + H(+). It carries out the reaction prostaglandin A2 + glutathione = prostaglandin A2-S-(R)-glutathione. The enzyme catalyses prostaglandin J2 + glutathione = prostaglandin J2-S-(R)-glutathione. It catalyses the reaction (13S)-hydroperoxy-(9Z,11E)-octadecadienoate + 2 glutathione = (13S)-hydroxy-(9Z,11E)-octadecadienoate + glutathione disulfide + H2O. The catalysed reaction is androst-5-ene-3,17-dione = androst-4-ene-3,17-dione. In terms of biological role, glutathione S-transferase that catalyzes the nucleophilic attack of the sulfur atom of glutathione on the electrophilic groups of a wide range of exogenous and endogenous compounds. Involved in the formation of glutathione conjugates of both prostaglandin A2 (PGA2) and prostaglandin J2 (PGJ2). It also catalyzes the isomerization of D5-androstene-3,17-dione (AD) into D4-androstene-3,17-dione and may therefore play an important role in hormone biosynthesis. Through its glutathione-dependent peroxidase activity toward the fatty acid hydroperoxide (13S)-hydroperoxy-(9Z,11E)-octadecadienoate/13-HPODE it is also involved in the metabolism of oxidized linoleic acid. The protein is Glutathione S-transferase of Gallus gallus (Chicken).